The following is a 289-amino-acid chain: Glucosamine-6-phosphate deaminase 1 (289 aa).

N6-acetyllysine is present on Lys-64. Catalysis depends on Asp-72, which acts as the Proton acceptor; for enolization step. Catalysis depends on Asp-141, which acts as the For ring-opening step. The active-site Proton acceptor; for ring-opening step is the His-143. Residue Glu-148 is the For ring-opening step of the active site. Residue Thr-161 is modified to Phosphothreonine.

The protein belongs to the glucosamine/galactosamine-6-phosphate isomerase family. In terms of assembly, homohexamer.

It localises to the cytoplasm. It carries out the reaction alpha-D-glucosamine 6-phosphate + H2O = beta-D-fructose 6-phosphate + NH4(+). It participates in nucleotide-sugar biosynthesis; UDP-N-acetyl-alpha-D-glucosamine biosynthesis; alpha-D-glucosamine 6-phosphate from D-fructose 6-phosphate: step 1/1. With respect to regulation, allosterically activated by N-acetylglucosamine-6-phosphate (GlcNAc6P). In terms of biological role, catalyzes the reversible conversion of alpha-D-glucosamine 6-phosphate (GlcN-6P) into beta-D-fructose 6-phosphate (Fru-6P) and ammonium ion, a regulatory reaction step in de novo uridine diphosphate-N-acetyl-alpha-D-glucosamine (UDP-GlcNAc) biosynthesis via hexosamine pathway. Deamination is coupled to aldo-keto isomerization mediating the metabolic flux from UDP-GlcNAc toward Fru-6P. At high ammonium level can drive amination and isomerization of Fru-6P toward hexosamines and UDP-GlcNAc synthesis. Has a role in fine tuning the metabolic fluctuations of cytosolic UDP-GlcNAc and their effects on hyaluronan synthesis that occur during tissue remodeling. Seems to trigger calcium oscillations in mammalian eggs. These oscillations serve as the essential trigger for egg activation and early development of the embryo. The polypeptide is Glucosamine-6-phosphate deaminase 1 (Bos taurus (Bovine)).